Here is a 118-residue protein sequence, read N- to C-terminus: MSDNPQEYELDWDVEKRLKLNDAGLVPAIVQADGTNEVLMMAWMDTHALAYTLATRRGTYFSRSRNEYWIKGLTSGNVQEVTGLALDCDGDTVLLTVKQTGGACHTGAHTCFDNDVLL.

A Mg(2+)-binding site is contributed by D87. C88 provides a ligand contact to Zn(2+). Residues D89 and D91 each coordinate Mg(2+). Zn(2+) contacts are provided by C104 and C111.

This sequence belongs to the PRA-CH family. Homodimer. The cofactor is Mg(2+). It depends on Zn(2+) as a cofactor.

The protein localises to the cytoplasm. It carries out the reaction 1-(5-phospho-beta-D-ribosyl)-5'-AMP + H2O = 1-(5-phospho-beta-D-ribosyl)-5-[(5-phospho-beta-D-ribosylamino)methylideneamino]imidazole-4-carboxamide. The protein operates within amino-acid biosynthesis; L-histidine biosynthesis; L-histidine from 5-phospho-alpha-D-ribose 1-diphosphate: step 3/9. Catalyzes the hydrolysis of the adenine ring of phosphoribosyl-AMP. The polypeptide is Phosphoribosyl-AMP cyclohydrolase (Corynebacterium glutamicum (strain ATCC 13032 / DSM 20300 / JCM 1318 / BCRC 11384 / CCUG 27702 / LMG 3730 / NBRC 12168 / NCIMB 10025 / NRRL B-2784 / 534)).